A 189-amino-acid polypeptide reads, in one-letter code: Peptidyl-tRNA hydrolase (189 aa).

Y14 contributes to the tRNA binding site. H19 serves as the catalytic Proton acceptor. Y64, N66, and N112 together coordinate tRNA.

The protein belongs to the PTH family. As to quaternary structure, monomer.

The protein localises to the cytoplasm. It catalyses the reaction an N-acyl-L-alpha-aminoacyl-tRNA + H2O = an N-acyl-L-amino acid + a tRNA + H(+). Functionally, hydrolyzes ribosome-free peptidyl-tRNAs (with 1 or more amino acids incorporated), which drop off the ribosome during protein synthesis, or as a result of ribosome stalling. Catalyzes the release of premature peptidyl moieties from peptidyl-tRNA molecules trapped in stalled 50S ribosomal subunits, and thus maintains levels of free tRNAs and 50S ribosomes. This is Peptidyl-tRNA hydrolase from Clostridium botulinum (strain Kyoto / Type A2).